The following is a 200-amino-acid chain: Holliday junction branch migration complex subunit RuvA (200 aa).

The segment at 1-63 (MIASVRGVVT…EDSLTLYGFA (63 aa)) is domain I. The interval 64–142 (DDDAKALFEL…PVPVGADSAA (79 aa)) is domain II. The interval 143 to 151 (GVTTGAWPE) is flexible linker. A domain III region spans residues 151 to 200 (EQVRQALVGLGWTAAQADQAVTAVAETVDGAVPPVPVLLRQAIRLLGRTR).

Belongs to the RuvA family. Homotetramer. Forms an RuvA(8)-RuvB(12)-Holliday junction (HJ) complex. HJ DNA is sandwiched between 2 RuvA tetramers; dsDNA enters through RuvA and exits via RuvB. An RuvB hexamer assembles on each DNA strand where it exits the tetramer. Each RuvB hexamer is contacted by two RuvA subunits (via domain III) on 2 adjacent RuvB subunits; this complex drives branch migration. In the full resolvosome a probable DNA-RuvA(4)-RuvB(12)-RuvC(2) complex forms which resolves the HJ.

The protein resides in the cytoplasm. The RuvA-RuvB-RuvC complex processes Holliday junction (HJ) DNA during genetic recombination and DNA repair, while the RuvA-RuvB complex plays an important role in the rescue of blocked DNA replication forks via replication fork reversal (RFR). RuvA specifically binds to HJ cruciform DNA, conferring on it an open structure. The RuvB hexamer acts as an ATP-dependent pump, pulling dsDNA into and through the RuvAB complex. HJ branch migration allows RuvC to scan DNA until it finds its consensus sequence, where it cleaves and resolves the cruciform DNA. The protein is Holliday junction branch migration complex subunit RuvA of Salinispora tropica (strain ATCC BAA-916 / DSM 44818 / JCM 13857 / NBRC 105044 / CNB-440).